The sequence spans 965 residues: Phosphatidylethanolamine N-methyltransferase (965 aa).

The interval 1–55 (MSSSAADPFAARLNSDVRQRHPTASATSKNVEGTSQQKQQQQQQQSEANAAASRV) is disordered. The Lumenal segment spans residues 1 to 91 (MSSSAADPFA…DPREPKNLSD (91 aa)). The span at 22–35 (PTASATSKNVEGTS) shows a compositional bias: polar residues. Over residues 36–45 (QQKQQQQQQQ) the composition is skewed to low complexity. A helical transmembrane segment spans residues 92–112 (VAVLAIIALHFLAAYYLPWGV). Residues 113 to 115 (KRP) are Cytoplasmic-facing. Residues 116-136 (LFAAIFMFWRLAYNVGIGYLL) traverse the membrane as a helical segment. Over 137-201 (TIQSKYKLLV…EYNTWLTFRR (65 aa)) the chain is Lumenal. A helical membrane pass occupies residues 202–222 (VVDLILMCDFISYCLFAIVCA). At 223 to 229 (HKPDGEG) the chain is on the cytoplasmic side. Residues 230 to 250 (LFMCFARWAAGITLVGFNLWV) form a helical membrane-spanning segment. Residues 251-279 (KLDAHRVVKDYAWYWGDFFYLIEQELTFD) lie on the Lumenal side of the membrane. Residues 280–300 (GVFELAPHPMYSIGYAGYYGI) form a helical membrane-spanning segment. Residues 301–306 (SMMAAS) are Cytoplasmic-facing. The chain crosses the membrane as a helical span at residues 307 to 327 (YDVLFISIIAHAAQFAFLVIV). Residues 328 to 389 (ENPHIEKTYN…IGLKNLDFFR (62 aa)) are Lumenal-facing. The chain crosses the membrane as a helical span at residues 390–410 (ITDVAIVLLCAYLAVVTMVTP). Topologically, residues 411–417 (NTRFYQA) are cytoplasmic. Residues 418–438 (LFVLHALAWRLWYSAGLGVIL) form a helical membrane-spanning segment. Residues 439–467 (TMQSEEKMFTRHFLKYGESVGEAWRQWKG) lie on the Lumenal side of the membrane. A helical transmembrane segment spans residues 468-488 (IYHLSNCLCHASFIAASYKMY). Over 489–496 (EFPADWTY) the chain is Cytoplasmic. A helical membrane pass occupies residues 497 to 517 (GWALLKHVVGLSLIALQVWTA). Residues 518–573 (TSIYESLGEFGWFYGDFFFDSKRQLTYTSIYRFLNNPERVFGTAGLWGAALITWSR) are Lumenal-facing. A helical transmembrane segment spans residues 574-594 (AIFLMALAGHFLTLAFLAYVE). The Cytoplasmic segment spans residues 595-965 (KPHMQKVYGR…TTPVDSKFSE (371 aa)).

The protein belongs to the class VI-like SAM-binding methyltransferase superfamily. CHO2 family.

It is found in the endoplasmic reticulum membrane. It carries out the reaction a 1,2-diacyl-sn-glycero-3-phosphoethanolamine + S-adenosyl-L-methionine = a 1,2-diacyl-sn-glycero-3-phospho-N-methylethanolamine + S-adenosyl-L-homocysteine + H(+). The protein operates within phospholipid metabolism; phosphatidylcholine biosynthesis. Functionally, catalyzes the first step of the methylation pathway of phosphatidylcholine biosynthesis, the SAM-dependent methylation of phosphatidylethanolamine (PE) to phosphatidylmonomethylethanolamine (PMME). This chain is Phosphatidylethanolamine N-methyltransferase, found in Neurospora crassa (strain ATCC 24698 / 74-OR23-1A / CBS 708.71 / DSM 1257 / FGSC 987).